A 251-amino-acid chain; its full sequence is Probable transcriptional regulatory protein Mflv_3828 (251 aa).

Belongs to the TACO1 family.

The protein localises to the cytoplasm. The polypeptide is Probable transcriptional regulatory protein Mflv_3828 (Mycolicibacterium gilvum (strain PYR-GCK) (Mycobacterium gilvum (strain PYR-GCK))).